The sequence spans 287 residues: Carbon monoxide dehydrogenase medium chain (287 aa).

The region spanning 1–177 (MIPPRFEYHA…VEIRVPAFAQ (177 aa)) is the FAD-binding PCMH-type domain. Residues 32–36 (AGGHS) and 111–115 (TIGGD) each bind FAD.

As to quaternary structure, dimer of heterotrimers. Each heterotrimer consists of a large, a medium and a small subunit. Requires FAD as cofactor.

It carries out the reaction CO + a quinone + H2O = a quinol + CO2. In terms of biological role, catalyzes the oxidation of carbon monoxide to carbon dioxide. The sequence is that of Carbon monoxide dehydrogenase medium chain (cutM) from Hydrogenophaga pseudoflava (Pseudomonas carboxydoflava).